A 492-amino-acid polypeptide reads, in one-letter code: Serine incorporator 4 (492 aa).

The next 10 membrane-spanning stretches (helical) occupy residues 59 to 79 (YILL…KTVV), 113 to 133 (AVYR…VLLV), 148 to 168 (SFWS…FCIP), 179 to 199 (IGIC…TAFA), 219 to 239 (GVSL…VLLF), 254 to 274 (LLSL…APCI), 281 to 301 (SGLL…FSAL), 330 to 350 (IPDT…VLFA), 421 to 441 (GFHF…TNWF), and 464 to 484 (VASC…PLLA).

The protein belongs to the TDE1 family.

It localises to the membrane. Functionally, incorporates a polar amino acid serine into membranes and facilitates the synthesis of two serine-derived lipids, phosphatidylserine and sphingolipids. This is Serine incorporator 4 (Serinc4) from Mus musculus (Mouse).